A 456-amino-acid polypeptide reads, in one-letter code: Bifunctional protein GlmU (456 aa).

The interval 1 to 229 (MSNSSMSVVI…LSEVEGVNNR (229 aa)) is pyrophosphorylase. Residues 11–14 (LAAG), Lys-25, Gln-76, 81–82 (GT), 103–105 (YGD), Gly-140, Glu-154, Asn-169, and Asn-227 each bind UDP-N-acetyl-alpha-D-glucosamine. Asp-105 serves as a coordination point for Mg(2+). Asn-227 lines the Mg(2+) pocket. A linker region spans residues 230 to 250 (LQLSALERVFQTEQAEKLLLA). Residues 251–456 (GVMLLDPSRF…QGWKRPVKKK (206 aa)) are N-acetyltransferase. UDP-N-acetyl-alpha-D-glucosamine is bound by residues Arg-333 and Lys-351. The active-site Proton acceptor is the His-363. UDP-N-acetyl-alpha-D-glucosamine contacts are provided by Tyr-366 and Asn-377. Acetyl-CoA is bound by residues Ala-380, 386–387 (NY), Ser-405, Ala-423, and Arg-440.

It in the N-terminal section; belongs to the N-acetylglucosamine-1-phosphate uridyltransferase family. This sequence in the C-terminal section; belongs to the transferase hexapeptide repeat family. As to quaternary structure, homotrimer. Mg(2+) serves as cofactor.

The protein localises to the cytoplasm. The enzyme catalyses alpha-D-glucosamine 1-phosphate + acetyl-CoA = N-acetyl-alpha-D-glucosamine 1-phosphate + CoA + H(+). It catalyses the reaction N-acetyl-alpha-D-glucosamine 1-phosphate + UTP + H(+) = UDP-N-acetyl-alpha-D-glucosamine + diphosphate. The protein operates within nucleotide-sugar biosynthesis; UDP-N-acetyl-alpha-D-glucosamine biosynthesis; N-acetyl-alpha-D-glucosamine 1-phosphate from alpha-D-glucosamine 6-phosphate (route II): step 2/2. It functions in the pathway nucleotide-sugar biosynthesis; UDP-N-acetyl-alpha-D-glucosamine biosynthesis; UDP-N-acetyl-alpha-D-glucosamine from N-acetyl-alpha-D-glucosamine 1-phosphate: step 1/1. It participates in bacterial outer membrane biogenesis; LPS lipid A biosynthesis. In terms of biological role, catalyzes the last two sequential reactions in the de novo biosynthetic pathway for UDP-N-acetylglucosamine (UDP-GlcNAc). The C-terminal domain catalyzes the transfer of acetyl group from acetyl coenzyme A to glucosamine-1-phosphate (GlcN-1-P) to produce N-acetylglucosamine-1-phosphate (GlcNAc-1-P), which is converted into UDP-GlcNAc by the transfer of uridine 5-monophosphate (from uridine 5-triphosphate), a reaction catalyzed by the N-terminal domain. The polypeptide is Bifunctional protein GlmU (Yersinia pseudotuberculosis serotype O:1b (strain IP 31758)).